The following is a 74-amino-acid chain: MKKKVLKHCVILGILGTCLAGIGTGIKVDAATYYGNGLYCNKEKCWVDWNQAKGEIGKIIVNGWVNHGPWAPRR.

The first 30 residues, 1-30 (MKKKVLKHCVILGILGTCLAGIGTGIKVDA), serve as a signal peptide directing secretion.

The protein localises to the secreted. In terms of biological role, bacteriocin with antibacterial activity against the Gram-positive Listeria, Enterococcus, Propionibacterium, Staphylococcus and some strains of Clostridium, Lactobacillus and Pediococcus. Lacks antibacterial activity against Gram-negative bacteria. This chain is Bacteriocin hiracin-JM79, found in Enterococcus hirae.